The sequence spans 376 residues: Quinolinate synthase (376 aa).

Residues His57 and Ser78 each coordinate iminosuccinate. A [4Fe-4S] cluster-binding site is contributed by Cys123. Residues 149–151 (YAN) and Ser166 each bind iminosuccinate. Cys210 serves as a coordination point for [4Fe-4S] cluster. Iminosuccinate contacts are provided by residues 236–238 (HPE) and Thr253. A [4Fe-4S] cluster-binding site is contributed by Cys307.

The protein belongs to the quinolinate synthase family. Type 1 subfamily. It depends on [4Fe-4S] cluster as a cofactor.

The protein localises to the cytoplasm. The enzyme catalyses iminosuccinate + dihydroxyacetone phosphate = quinolinate + phosphate + 2 H2O + H(+). It functions in the pathway cofactor biosynthesis; NAD(+) biosynthesis; quinolinate from iminoaspartate: step 1/1. Its function is as follows. Catalyzes the condensation of iminoaspartate with dihydroxyacetone phosphate to form quinolinate. The protein is Quinolinate synthase of Paraburkholderia phymatum (strain DSM 17167 / CIP 108236 / LMG 21445 / STM815) (Burkholderia phymatum).